A 445-amino-acid polypeptide reads, in one-letter code: tRNA modification GTPase MnmE (445 aa).

(6S)-5-formyl-5,6,7,8-tetrahydrofolate contacts are provided by arginine 24, glutamate 81, and lysine 121. Residues 218 to 369 (GLTVVIAGPP…LLEALVGFAR (152 aa)) form the TrmE-type G domain. Residues 228 to 233 (NAGKST), 247 to 253 (SPHAGTT), 272 to 275 (DTAG), and 350 to 352 (SAR) each bind GTP. The Mg(2+) site is built by serine 232 and threonine 253. Lysine 445 provides a ligand contact to (6S)-5-formyl-5,6,7,8-tetrahydrofolate.

Belongs to the TRAFAC class TrmE-Era-EngA-EngB-Septin-like GTPase superfamily. TrmE GTPase family. In terms of assembly, homodimer. Heterotetramer of two MnmE and two MnmG subunits. The cofactor is K(+).

Its subcellular location is the cytoplasm. Exhibits a very high intrinsic GTPase hydrolysis rate. Involved in the addition of a carboxymethylaminomethyl (cmnm) group at the wobble position (U34) of certain tRNAs, forming tRNA-cmnm(5)s(2)U34. In Bradyrhizobium sp. (strain BTAi1 / ATCC BAA-1182), this protein is tRNA modification GTPase MnmE.